Reading from the N-terminus, the 128-residue chain is Fluoride-specific ion channel FluC 1 (128 aa).

4 consecutive transmembrane segments (helical) span residues 10-30, 32-52, 59-79, and 93-113; these read VAFF…AFSF, GTVI…YFFL, AWLT…FSSF, and FGAL…AWAG. The Na(+) site is built by Gly-71 and Thr-74.

The protein belongs to the fluoride channel Fluc/FEX (TC 1.A.43) family.

Its subcellular location is the cell membrane. It catalyses the reaction fluoride(in) = fluoride(out). Na(+) is not transported, but it plays an essential structural role and its presence is essential for fluoride channel function. Fluoride-specific ion channel. Important for reducing fluoride concentration in the cell, thus reducing its toxicity. This is Fluoride-specific ion channel FluC 1 from Lactobacillus delbrueckii subsp. bulgaricus (strain ATCC 11842 / DSM 20081 / BCRC 10696 / JCM 1002 / NBRC 13953 / NCIMB 11778 / NCTC 12712 / WDCM 00102 / Lb 14).